The primary structure comprises 243 residues: Benzil reductase ((S)-benzoin forming) (243 aa).

5 residues coordinate NADP(+): Ile-6, Asn-80, Tyr-147, Lys-151, and Thr-184. The active-site Proton acceptor is Tyr-147.

It belongs to the short-chain dehydrogenases/reductases (SDR) family.

Its subcellular location is the cytoplasm. It carries out the reaction (S)-benzoin + NADP(+) = benzil + NADPH + H(+). Functionally, reduces benzil stereospecifically to (S)-benzoin. This Bacillus subtilis (strain 168) protein is Benzil reductase ((S)-benzoin forming) (yueD).